Reading from the N-terminus, the 409-residue chain is Phosphatidylglycerol--prolipoprotein diacylglyceryl transferase (409 aa).

A run of 4 helical transmembrane segments spans residues 18-38 (PVPL…AVFV), 48-68 (MDPM…IVGA), 93-113 (IWNG…GAWL), and 119-139 (GISL…AQAI). Position 141 (Arg-141) interacts with a 1,2-diacyl-sn-glycero-3-phospho-(1'-sn-glycerol). 2 helical membrane passes run 177–197 (QPTF…LLVV) and 234–254 (ILGL…ALLA). The segment at 273-409 (ALGIARSRPA…AVPPEEPQLP (137 aa)) is disordered. Composition is skewed to low complexity over residues 297–309 (AAAP…DSAA), 320–335 (PDLG…SAGS), and 348–375 (TATT…TATT).

Belongs to the Lgt family.

The protein resides in the cell membrane. It carries out the reaction L-cysteinyl-[prolipoprotein] + a 1,2-diacyl-sn-glycero-3-phospho-(1'-sn-glycerol) = an S-1,2-diacyl-sn-glyceryl-L-cysteinyl-[prolipoprotein] + sn-glycerol 1-phosphate + H(+). The protein operates within protein modification; lipoprotein biosynthesis (diacylglyceryl transfer). In terms of biological role, catalyzes the transfer of the diacylglyceryl group from phosphatidylglycerol to the sulfhydryl group of the N-terminal cysteine of a prolipoprotein, the first step in the formation of mature lipoproteins. The polypeptide is Phosphatidylglycerol--prolipoprotein diacylglyceryl transferase (Frankia casuarinae (strain DSM 45818 / CECT 9043 / HFP020203 / CcI3)).